We begin with the raw amino-acid sequence, 447 residues long: Tubulin beta chain (447 aa).

The GTP site is built by Gln-11, Glu-69, Ser-138, Gly-142, Thr-143, Gly-144, Asn-204, and Asn-226. Glu-69 serves as a coordination point for Mg(2+). The interval 424–447 is disordered; that stretch reads QYQEASVSEGEEEYDEEAPLEGEE. The segment covering 432-447 has biased composition (acidic residues); the sequence is EGEEEYDEEAPLEGEE.

This sequence belongs to the tubulin family. As to quaternary structure, dimer of alpha and beta chains. A typical microtubule is a hollow water-filled tube with an outer diameter of 25 nm and an inner diameter of 15 nM. Alpha-beta heterodimers associate head-to-tail to form protofilaments running lengthwise along the microtubule wall with the beta-tubulin subunit facing the microtubule plus end conferring a structural polarity. Microtubules usually have 13 protofilaments but different protofilament numbers can be found in some organisms and specialized cells. The cofactor is Mg(2+).

The protein localises to the cytoplasm. The protein resides in the cytoskeleton. In terms of biological role, tubulin is the major constituent of microtubules, a cylinder consisting of laterally associated linear protofilaments composed of alpha- and beta-tubulin heterodimers. Microtubules grow by the addition of GTP-tubulin dimers to the microtubule end, where a stabilizing cap forms. Below the cap, tubulin dimers are in GDP-bound state, owing to GTPase activity of alpha-tubulin. The protein is Tubulin beta chain of Venturia inaequalis (Apple scab fungus).